A 461-amino-acid chain; its full sequence is Cysteine--tRNA ligase (461 aa).

Position 28 (cysteine 28) interacts with Zn(2+). The 'HIGH' region signature appears at isoleucine 30–histidine 40. Cysteine 209, histidine 234, and glutamate 238 together coordinate Zn(2+). The 'KMSKS' region motif lies at lysine 266–serine 270. Lysine 269 provides a ligand contact to ATP.

This sequence belongs to the class-I aminoacyl-tRNA synthetase family. Monomer. Zn(2+) serves as cofactor.

The protein localises to the cytoplasm. It carries out the reaction tRNA(Cys) + L-cysteine + ATP = L-cysteinyl-tRNA(Cys) + AMP + diphosphate. This chain is Cysteine--tRNA ligase, found in Salmonella arizonae (strain ATCC BAA-731 / CDC346-86 / RSK2980).